The following is a 245-amino-acid chain: 1-(5-phosphoribosyl)-5-[(5-phosphoribosylamino)methylideneamino] imidazole-4-carboxamide isomerase (245 aa).

Asp8 functions as the Proton acceptor in the catalytic mechanism. Residue Asp129 is the Proton donor of the active site.

It belongs to the HisA/HisF family.

It is found in the cytoplasm. It carries out the reaction 1-(5-phospho-beta-D-ribosyl)-5-[(5-phospho-beta-D-ribosylamino)methylideneamino]imidazole-4-carboxamide = 5-[(5-phospho-1-deoxy-D-ribulos-1-ylimino)methylamino]-1-(5-phospho-beta-D-ribosyl)imidazole-4-carboxamide. Its pathway is amino-acid biosynthesis; L-histidine biosynthesis; L-histidine from 5-phospho-alpha-D-ribose 1-diphosphate: step 4/9. The chain is 1-(5-phosphoribosyl)-5-[(5-phosphoribosylamino)methylideneamino] imidazole-4-carboxamide isomerase from Geotalea uraniireducens (strain Rf4) (Geobacter uraniireducens).